Consider the following 487-residue polypeptide: Glycogen synthase (487 aa).

Residue Lys-20 participates in ADP-alpha-D-glucose binding.

Belongs to the glycosyltransferase 1 family. Bacterial/plant glycogen synthase subfamily.

It carries out the reaction [(1-&gt;4)-alpha-D-glucosyl](n) + ADP-alpha-D-glucose = [(1-&gt;4)-alpha-D-glucosyl](n+1) + ADP + H(+). It functions in the pathway glycan biosynthesis; glycogen biosynthesis. Synthesizes alpha-1,4-glucan chains using ADP-glucose. This is Glycogen synthase from Aliivibrio fischeri (strain ATCC 700601 / ES114) (Vibrio fischeri).